Here is a 474-residue protein sequence, read N- to C-terminus: Fumarate hydratase class II (474 aa).

Residues 104–106, 128–131, 138–140, and threonine 186 contribute to the substrate site; these read SGT, HPND, and SSN. Catalysis depends on histidine 187, which acts as the Proton donor/acceptor. Serine 318 is an active-site residue. Residues serine 319 and 324 to 326 each bind substrate; that span reads KVN.

The protein belongs to the class-II fumarase/aspartase family. Fumarase subfamily. Homotetramer.

The protein localises to the cytoplasm. The catalysed reaction is (S)-malate = fumarate + H2O. The protein operates within carbohydrate metabolism; tricarboxylic acid cycle; (S)-malate from fumarate: step 1/1. Involved in the TCA cycle. Catalyzes the stereospecific interconversion of fumarate to L-malate. The protein is Fumarate hydratase class II of Mycobacterium bovis (strain ATCC BAA-935 / AF2122/97).